The primary structure comprises 338 residues: Ribosomal RNA small subunit methyltransferase C (338 aa).

Belongs to the methyltransferase superfamily. RsmC family. As to quaternary structure, monomer.

It localises to the cytoplasm. The catalysed reaction is guanosine(1207) in 16S rRNA + S-adenosyl-L-methionine = N(2)-methylguanosine(1207) in 16S rRNA + S-adenosyl-L-homocysteine + H(+). Its function is as follows. Specifically methylates the guanine in position 1207 of 16S rRNA in the 30S particle. The sequence is that of Ribosomal RNA small subunit methyltransferase C from Photorhabdus laumondii subsp. laumondii (strain DSM 15139 / CIP 105565 / TT01) (Photorhabdus luminescens subsp. laumondii).